The chain runs to 499 residues: Heparin cofactor 2 (499 aa).

The N-terminal stretch at M1 to G19 is a signal peptide. A Phosphoserine; by FAM20C modification is found at S37. An N-linked (GlcNAc...) (complex) asparagine glycan is attached at N49. The interval D68 to Y79 is chemotactic activity. 2 repeat units span residues G73–E83 and S87–D97. The 2 X 11 AA approximate repeats, Asp/Glu-rich (acidic) (hirudin-like) stretch occupies residues G73–D97. 2 positions are modified to sulfotyrosine: Y79 and Y92. N188 carries N-linked (GlcNAc...) asparagine glycosylation. Residues K192–R212 form a glycosaminoglycan-binding site region. The N-linked (GlcNAc...) asparagine glycan is linked to N387.

Belongs to the serpin family. In terms of processing, phosphorylated by FAM20C in the extracellular medium. As to expression, expressed predominantly in liver. Also present in plasma. In terms of tissue distribution, expressed in plasma (at protein level). Expressed in liver.

In terms of biological role, thrombin inhibitor activated by the glycosaminoglycans, heparin or dermatan sulfate. In the presence of the latter, HC-II becomes the predominant thrombin inhibitor in place of antithrombin III (AT-III). Also inhibits chymotrypsin, but in a glycosaminoglycan-independent manner. Its function is as follows. Peptides at the N-terminal of HC-II have chemotactic activity for both monocytes and neutrophils. Shows negligible inhibition, in vitro, of thrombin and tPA and no inhibition of factor Xa, in vitro. The sequence is that of Heparin cofactor 2 (SERPIND1) from Homo sapiens (Human).